Here is a 208-residue protein sequence, read N- to C-terminus: MHDPVEYFQNNLVPMVVEQTSRGERAYDIFSRLLKERIVFVNGPVHSGMSHLIVAQLLHLEAENPSKEISMYINSPGGEVTAGMSIYDTMQYIKPKVSTLVCGMAASMGSVIAVGGEKGMRLALPNAEFLVHQPSGGARGTASDILISARSIEATRERLYQLYVKHTGQDYETVQRALDRDTWMTPEVALEWGHVDEIVTTRGADDAE.

Catalysis depends on Ser107, which acts as the Nucleophile. His132 is a catalytic residue.

Belongs to the peptidase S14 family. Fourteen ClpP subunits assemble into 2 heptameric rings which stack back to back to give a disk-like structure with a central cavity, resembling the structure of eukaryotic proteasomes.

It localises to the cytoplasm. It catalyses the reaction Hydrolysis of proteins to small peptides in the presence of ATP and magnesium. alpha-casein is the usual test substrate. In the absence of ATP, only oligopeptides shorter than five residues are hydrolyzed (such as succinyl-Leu-Tyr-|-NHMec, and Leu-Tyr-Leu-|-Tyr-Trp, in which cleavage of the -Tyr-|-Leu- and -Tyr-|-Trp bonds also occurs).. Cleaves peptides in various proteins in a process that requires ATP hydrolysis. Has a chymotrypsin-like activity. Plays a major role in the degradation of misfolded proteins. This Jannaschia sp. (strain CCS1) protein is ATP-dependent Clp protease proteolytic subunit.